Reading from the N-terminus, the 907-residue chain is Envelope glycoprotein B (907 aa).

Residues 1 to 22 (MESRIWCLVVCVNLCIVCLGAA) form the signal peptide. Over 23–751 (VSSSSTRGTS…EGVATFLKNP (729 aa)) the chain is Virion surface. Residues 29 to 62 (RGTSATHSHHSSHTTSAAHSRSGSVSQRVTSSQT) are disordered. Low complexity predominate over residues 41-62 (HTTSAAHSRSGSVSQRVTSSQT). Asn-68, Asn-73, and Asn-85 each carry an N-linked (GlcNAc...) asparagine; by host glycan. Cystine bridges form between Cys-94/Cys-551, Cys-111/Cys-507, Cys-185/Cys-250, and Cys-344/Cys-391. Residues 152-158 (SYAYIHT) are involved in fusion and/or binding to host membrane. Asn-208 carries N-linked (GlcNAc...) asparagine; by host glycosylation. An involved in fusion and/or binding to host membrane region spans residues 237–244 (GSTWLYRE). Residues Asn-281, Asn-286, Asn-302, Asn-341, Asn-383, Asn-405, Asn-409, Asn-417, Asn-447, Asn-452, Asn-456, Asn-466, Asn-555, and Asn-586 are each glycosylated (N-linked (GlcNAc...) asparagine; by host). Cys-574 and Cys-611 are oxidised to a cystine. Hydrophobic membrane proximal region stretches follow at residues 697-749 (VEDK…TFLK) and 708-748 (YLKG…ATFL). A helical membrane pass occupies residues 752-772 (FGAFTIILVAIAVVIIIYLIY). Residues 773–907 (TRQRRLCMQP…LKDSDEEENV (135 aa)) lie on the Intravirion side of the membrane. Composition is skewed to polar residues over residues 798 to 810 (VTSG…SLQA) and 860 to 877 (RAQQ…GTQD). 2 disordered regions span residues 798–838 (VTSG…TAAP) and 860–907 (RAQQ…EENV). Positions 878–887 (KGQKPNLLDR) are enriched in basic and acidic residues. The short motif at 895 to 898 (YRHL) is the Internalization motif element.

It belongs to the herpesviridae glycoprotein B family. As to quaternary structure, homotrimer; disulfide-linked. Binds to heparan sulfate proteoglycans. Interacts with gH/gL heterodimer. Interacts with host C-type lectin CD209/DC-SIGN. Interacts with host ITGB1, EGFR, and PDGFRA. A proteolytic cleavage by host furin generates two subunits that remain linked by disulfide bonds.

The protein localises to the virion membrane. It localises to the host cell membrane. Its subcellular location is the host endosome membrane. The protein resides in the host Golgi apparatus membrane. In terms of biological role, envelope glycoprotein that plays a role in host cell entry, cell to-cell virus transmission, and fusion of infected cells. May be involved in the initial attachment via binding to heparan sulfate together with the gM/gN complex that binds heparin with higher affinity. Interacts with host integrin ITGB1, PDGFRA and EGFR that likely serve as postattachment entry receptors. Also participates in the fusion of viral and cellular membranes leading to virus entry into the host cell. Membrane fusion is mediated by the fusion machinery composed at least of gB and the heterodimer gH/gL. The protein is Envelope glycoprotein B of Homo sapiens (Human).